Here is a 534-residue protein sequence, read N- to C-terminus: Cytidylyl-2-hydroxyethylphosphonate methyltransferase (534 aa).

The region spanning Lys-38–Asp-195 is the B12-binding domain. The Radical SAM core domain maps to Thr-268–Pro-496. [4Fe-4S] cluster-binding residues include Cys-282, Cys-286, and Cys-289.

This sequence belongs to the radical SAM superfamily. The cofactor is [4Fe-4S] cluster. Requires methylcob(III)alamin as cofactor.

It carries out the reaction cytidine 5'-{[hydroxy(2-hydroxyethyl)phosphonoyl]phosphate} + AH2 + 2 S-adenosyl-L-methionine = cytidine 5'-({hydroxy[(S)-2-hydroxypropyl]phosphonoyl}phosphate) + 5'-deoxyadenosine + L-methionine + A + S-adenosyl-L-homocysteine + 2 H(+). It functions in the pathway antibiotic biosynthesis; fosfomycin biosynthesis. Functionally, involved in fosfomycin biosynthesis. Catalyzes the C-methylation of cytidylyl-2-hydroxyethylphosphonate (HEP-CMP) to form cytidylyl-2-hydroxypropylphosphonate (HPP-CMP). The C-methylation is not stereoselective and the ratio of (S)- to (R)-HPP-CMP is almost equal in vitro. The chain is Cytidylyl-2-hydroxyethylphosphonate methyltransferase from Streptomyces wedmorensis.